A 340-amino-acid polypeptide reads, in one-letter code: L-threonine 3-dehydrogenase (340 aa).

C38 serves as a coordination point for Zn(2+). Catalysis depends on charge relay system residues T40 and H43. Residues H63, E64, C93, C96, C99, and C107 each contribute to the Zn(2+) site. Residues I175, D195, R200, 261 to 263, and 285 to 286 each bind NAD(+); these read LGI and IY.

This sequence belongs to the zinc-containing alcohol dehydrogenase family. Homotetramer. Zn(2+) is required as a cofactor.

Its subcellular location is the cytoplasm. It catalyses the reaction L-threonine + NAD(+) = (2S)-2-amino-3-oxobutanoate + NADH + H(+). The protein operates within amino-acid degradation; L-threonine degradation via oxydo-reductase pathway; glycine from L-threonine: step 1/2. Functionally, catalyzes the NAD(+)-dependent oxidation of L-threonine to 2-amino-3-ketobutyrate. The chain is L-threonine 3-dehydrogenase from Xanthomonas euvesicatoria pv. vesicatoria (strain 85-10) (Xanthomonas campestris pv. vesicatoria).